The chain runs to 474 residues: Trehalose-6-phosphate synthase (474 aa).

A D-glucose 6-phosphate-binding site is contributed by Arg10. UDP-alpha-D-glucose is bound at residue 22–23; that stretch reads GG. 2 residues coordinate D-glucose 6-phosphate: Tyr77 and Asp131. 2 residues coordinate UDP-alpha-D-glucose: Arg263 and Lys268. Arg301 contacts D-glucose 6-phosphate. UDP-alpha-D-glucose contacts are provided by residues Phe340 and 366-370; that span reads LVAKE.

The protein belongs to the glycosyltransferase 20 family. Homotetramer.

It carries out the reaction D-glucose 6-phosphate + UDP-alpha-D-glucose = alpha,alpha-trehalose 6-phosphate + UDP + H(+). It functions in the pathway glycan biosynthesis; trehalose biosynthesis. Its function is as follows. Probably involved in the osmoprotection via the biosynthesis of trehalose. Catalyzes the transfer of glucose from UDP-alpha-D-glucose (UDP-Glc) to D-glucose 6-phosphate (Glc-6-P) to form trehalose-6-phosphate. Acts with retention of the anomeric configuration of the UDP-sugar donor. This Escherichia coli O9:H4 (strain HS) protein is Trehalose-6-phosphate synthase.